The chain runs to 66 residues: Large ribosomal subunit protein bL33c (66 aa).

Belongs to the bacterial ribosomal protein bL33 family.

It is found in the plastid. The protein resides in the chloroplast. This is Large ribosomal subunit protein bL33c from Drimys granadensis.